The following is a 174-amino-acid chain: MSRVAKKPIDLGKVELNVQNDNVTAKGPKGTLSLAKPAGIAINVENGVATLSTESVDLIPLTGTVRAILSNMVKGVSEGFERKLELVGVGYRAAMQGKDLSLSLGFSHPIVFVAPEGITITTPTQTEILVQGADKQVVGEVAAKIRAFRKPEPYKGKGVKYSDEVIIRKEAKKA.

The protein belongs to the universal ribosomal protein uL6 family. Part of the 50S ribosomal subunit.

Functionally, this protein binds to the 23S rRNA, and is important in its secondary structure. It is located near the subunit interface in the base of the L7/L12 stalk, and near the tRNA binding site of the peptidyltransferase center. In Stenotrophomonas maltophilia (strain R551-3), this protein is Large ribosomal subunit protein uL6.